The sequence spans 306 residues: Ornithine carbamoyltransferase (306 aa).

Carbamoyl phosphate is bound by residues S46–T49, Q73, R97, and H124–Q127. Residues N156, D220, and S224–M225 contribute to the L-ornithine site. Carbamoyl phosphate-binding positions include C260–L261 and R288.

The protein belongs to the aspartate/ornithine carbamoyltransferase superfamily. OTCase family.

It is found in the cytoplasm. It catalyses the reaction carbamoyl phosphate + L-ornithine = L-citrulline + phosphate + H(+). Its pathway is amino-acid biosynthesis; L-arginine biosynthesis; L-arginine from L-ornithine and carbamoyl phosphate: step 1/3. In terms of biological role, reversibly catalyzes the transfer of the carbamoyl group from carbamoyl phosphate (CP) to the N(epsilon) atom of ornithine (ORN) to produce L-citrulline. This is Ornithine carbamoyltransferase from Campylobacter jejuni subsp. jejuni serotype O:23/36 (strain 81-176).